The sequence spans 343 residues: Fructose-1,6-bisphosphatase class 1 (343 aa).

Glu99, Asp121, Leu123, and Asp124 together coordinate Mg(2+). Residues 124-127, Asn218, Tyr250, and Lys283 contribute to the substrate site; that span reads DGSS. Glu289 contributes to the Mg(2+) binding site.

The protein belongs to the FBPase class 1 family. As to quaternary structure, homotetramer. Requires Mg(2+) as cofactor.

The protein resides in the cytoplasm. It carries out the reaction beta-D-fructose 1,6-bisphosphate + H2O = beta-D-fructose 6-phosphate + phosphate. The protein operates within carbohydrate biosynthesis; gluconeogenesis. This chain is Fructose-1,6-bisphosphatase class 1, found in Leptospira biflexa serovar Patoc (strain Patoc 1 / Ames).